A 988-amino-acid polypeptide reads, in one-letter code: Exportin-T (988 aa).

Belongs to the exportin family. As to expression, expressed in young leaves, growing leaf blades, young floral organs and root tips.

The protein resides in the nucleus. Its subcellular location is the cytoplasm. Probable tRNA nucleus export receptor which regulates tRNA processing and facilitates tRNA translocation across the nuclear pore complex. Is required for proper activity of the shoot apical meristem (SAM) and correct leaf initiation at different developmental stages, and may play a role in floral patterning. This is Exportin-T (PSD) from Arabidopsis thaliana (Mouse-ear cress).